The following is a 71-amino-acid chain: Hainantoxin-X-2 (71 aa).

The N-terminal stretch at 1 to 26 is a signal peptide; the sequence is MKTAIFTVVLALAVFAVLCLVVSTHA. Residues 27–43 constitute a propeptide that is removed on maturation; the sequence is ERHSKTDMEDSPMIQER. 2 disulfide bridges follow: C52–C65 and C61–C70.

This sequence belongs to the neurotoxin 36 family. 02 subfamily. Expressed by the venom gland.

The protein localises to the secreted. In terms of biological role, reversibly blocks N-type calcium channels (Cav2.2/CACNA1B) in rat dorsal root ganglion cells. Elicits no toxic symptoms in either vertebrates or invertebrates during a period of 48 hours post-injection, when it was assayed in vivo by direct injection into mice and cockroaches. The polypeptide is Hainantoxin-X-2 (Cyriopagopus hainanus (Chinese bird spider)).